The sequence spans 860 residues: Eukaryotic translation initiation factor 3 subunit C (860 aa).

A disordered region spans residues 1–76 (MSRFFYGNDS…SEESEEEDVV (76 aa)). Residues 10-51 (SDSDSSGSDEEELYSDEEVEQSEEESSEEDASSEEESSEDED) show a composition bias toward acidic residues. Residues 599–773 (FHMHINLELL…DAIVFRKGVE (175 aa)) enclose the PCI domain. A disordered region spans residues 812–860 (RDQGAGARGGRGPRGGGQARGGPRLPGGQQRRPGGQQFGGGALGGAIKA). Residues 817 to 831 (GARGGRGPRGGGQAR) show a composition bias toward gly residues. Positions 832-846 (GGPRLPGGQQRRPGG) are enriched in low complexity. Over residues 847 to 860 (QQFGGGALGGAIKA) the composition is skewed to gly residues.

The protein belongs to the eIF-3 subunit C family. Component of the eukaryotic translation initiation factor 3 (eIF-3) complex.

Its subcellular location is the cytoplasm. Its function is as follows. Component of the eukaryotic translation initiation factor 3 (eIF-3) complex, which is involved in protein synthesis of a specialized repertoire of mRNAs and, together with other initiation factors, stimulates binding of mRNA and methionyl-tRNAi to the 40S ribosome. The eIF-3 complex specifically targets and initiates translation of a subset of mRNAs involved in cell proliferation. The sequence is that of Eukaryotic translation initiation factor 3 subunit C (nip1) from Emericella nidulans (strain FGSC A4 / ATCC 38163 / CBS 112.46 / NRRL 194 / M139) (Aspergillus nidulans).